A 377-amino-acid polypeptide reads, in one-letter code: Ferric enterobactin transport protein FepE (377 aa).

Topologically, residues 1-41 are cytoplasmic; it reads MSSLNIKQGSDAHFPDYPLASPSNNEIDLLNLISVLWRAKK. Residues 42 to 62 traverse the membrane as a helical segment; that stretch reads TVMAVVFAFACAGLLISFILP. At 63 to 338 the chain is on the periplasmic side; the sequence is QKWTSAAVVT…LPVKKDGPGK (276 aa). A helical membrane pass occupies residues 339–359; it reads AIIVILSALIGGMVACGGVLL. The Cytoplasmic portion of the chain corresponds to 360–377; sequence RYAMASRKQDAMMADHLV.

It belongs to the WzzB/Cld/Rol family.

It localises to the cell inner membrane. Its function is as follows. Part of the ferric enterobactin transport system. This chain is Ferric enterobactin transport protein FepE (fepE), found in Escherichia coli (strain K12).